Here is a 68-residue protein sequence, read N- to C-terminus: Conotoxin Mr3.4 (68 aa).

An N-terminal signal peptide occupies residues 1–19 (MSKLGVLLTICLLLFPLTA). Residues 20–49 (VPLDGDQPADRPAERMQDDISSERHPFFDR) constitute a propeptide that is removed on maturation. 3 disulfide bridges follow: cysteine 53–cysteine 67, cysteine 54–cysteine 63, and cysteine 59–cysteine 66. Proline 65 carries the post-translational modification 4-hydroxyproline.

This sequence belongs to the conotoxin M superfamily. In terms of tissue distribution, expressed by the venom duct.

It is found in the secreted. In Conus marmoreus (Marble cone), this protein is Conotoxin Mr3.4.